Here is a 157-residue protein sequence, read N- to C-terminus: Regulatory protein RecX (157 aa).

This sequence belongs to the RecX family.

Its subcellular location is the cytoplasm. Functionally, modulates RecA activity. This chain is Regulatory protein RecX, found in Leptothrix cholodnii (strain ATCC 51168 / LMG 8142 / SP-6) (Leptothrix discophora (strain SP-6)).